The sequence spans 236 residues: Orotidine 5'-phosphate decarboxylase (236 aa).

Residues Asp-16, Lys-38, 65–74, Thr-123, Arg-184, Gln-193, Gly-213, and Arg-214 contribute to the substrate site; that span reads DLKLHDIGNT. The active-site Proton donor is the Lys-67.

The protein belongs to the OMP decarboxylase family. Type 1 subfamily. In terms of assembly, homodimer.

The catalysed reaction is orotidine 5'-phosphate + H(+) = UMP + CO2. It functions in the pathway pyrimidine metabolism; UMP biosynthesis via de novo pathway; UMP from orotate: step 2/2. Its function is as follows. Catalyzes the decarboxylation of orotidine 5'-monophosphate (OMP) to uridine 5'-monophosphate (UMP). The sequence is that of Orotidine 5'-phosphate decarboxylase from Methylobacterium sp. (strain 4-46).